The chain runs to 488 residues: N-succinylglutamate 5-semialdehyde dehydrogenase 2 (488 aa).

An NAD(+)-binding site is contributed by 221–226; that stretch reads GSSNTG. Active-site residues include E244 and C278.

Belongs to the aldehyde dehydrogenase family. AstD subfamily.

The catalysed reaction is N-succinyl-L-glutamate 5-semialdehyde + NAD(+) + H2O = N-succinyl-L-glutamate + NADH + 2 H(+). Its pathway is amino-acid degradation; L-arginine degradation via AST pathway; L-glutamate and succinate from L-arginine: step 4/5. Catalyzes the NAD-dependent reduction of succinylglutamate semialdehyde into succinylglutamate. This is N-succinylglutamate 5-semialdehyde dehydrogenase 2 from Pseudoalteromonas translucida (strain TAC 125).